Consider the following 284-residue polypeptide: Bifunctional protein FolD 1 (284 aa).

NADP(+) is bound by residues Gly164–Ser166, Ser189, and Ile230.

This sequence belongs to the tetrahydrofolate dehydrogenase/cyclohydrolase family. In terms of assembly, homodimer.

The catalysed reaction is (6R)-5,10-methylene-5,6,7,8-tetrahydrofolate + NADP(+) = (6R)-5,10-methenyltetrahydrofolate + NADPH. The enzyme catalyses (6R)-5,10-methenyltetrahydrofolate + H2O = (6R)-10-formyltetrahydrofolate + H(+). It functions in the pathway one-carbon metabolism; tetrahydrofolate interconversion. In terms of biological role, catalyzes the oxidation of 5,10-methylenetetrahydrofolate to 5,10-methenyltetrahydrofolate and then the hydrolysis of 5,10-methenyltetrahydrofolate to 10-formyltetrahydrofolate. In Rubrobacter xylanophilus (strain DSM 9941 / JCM 11954 / NBRC 16129 / PRD-1), this protein is Bifunctional protein FolD 1.